Here is a 218-residue protein sequence, read N- to C-terminus: Small ribosomal subunit protein uS3c (218 aa).

Positions 43 to 118 (IKNYVQKNMR…KLNIAITRIA (76 aa)) constitute a KH type-2 domain.

The protein belongs to the universal ribosomal protein uS3 family. In terms of assembly, part of the 30S ribosomal subunit.

The protein localises to the plastid. It localises to the chloroplast. The polypeptide is Small ribosomal subunit protein uS3c (rps3) (Buxus microphylla (Littleleaf boxwood)).